The sequence spans 582 residues: Urocanate reductase (582 aa).

An N-terminal signal peptide occupies residues 1-20 (MHYKKSIIGIAVTATAIIAG). Residue C21 is the site of N-palmitoyl cysteine attachment. C21 carries S-diacylglycerol cysteine lipidation. Residue T93 is modified to FMN phosphoryl threonine. Positions 143, 162, 170, 171, 175, 176, 285, and 352 each coordinate FAD. R411 functions as the Proton donor in the catalytic mechanism. The FAD site is built by H521, E550, and A565.

The protein belongs to the FAD-dependent oxidoreductase 2 family. FRD/SDH subfamily. The cofactor is FAD. It depends on FMN as a cofactor.

The protein localises to the cell membrane. It catalyses the reaction dihydrourocanate + A = urocanate + AH2. Its function is as follows. Catalyzes the two-electron reduction of urocanate to dihydrourocanate (also named imidazole propionate or deamino-histidine). The physiological electron donor is unknown; it might be the membrane-bound tetraheme cytochrome c (CymA). Enables anaerobic growth with urocanate as a sole terminal electron acceptor, and thus can provide the cells with a niche where no other bacteria can compete and survive. Is unable to reduce cinnamate and other unsaturated organic acids such as acrylic, crotonic, fumaric and orotic acids. Has no fumarate reductase or succinate dehydrogenase activity. The sequence is that of Urocanate reductase (urdA) from Shewanella oneidensis (strain ATCC 700550 / JCM 31522 / CIP 106686 / LMG 19005 / NCIMB 14063 / MR-1).